The chain runs to 190 residues: Large ribosomal subunit protein uL6 (190 aa).

Belongs to the universal ribosomal protein uL6 family.

This chain is Large ribosomal subunit protein uL6 (RpL9), found in Drosophila melanogaster (Fruit fly).